The sequence spans 231 residues: Quercetin 2,3-dioxygenase (231 aa).

A divalent metal cation contacts are provided by His57, His59, His101, and Glu103.

The protein belongs to the pirin family. Zn(2+) serves as cofactor. It depends on Co(2+) as a cofactor. Requires Fe(2+) as cofactor.

The enzyme catalyses quercetin + O2 = 2-(3,4-dihydroxybenzoyloxy)-4,6-dihydroxybenzoate + CO. The protein operates within flavonoid metabolism; quercetin degradation. Functionally, has quercetin 2,3-dioxygenase activity in vitro. Its physiological role is unknown; however, may provide a mechanism that would avoid inhibition of key cellular proteins, such as DNA gyrase, by quercetin. The sequence is that of Quercetin 2,3-dioxygenase (yhhW) from Escherichia coli O157:H7.